We begin with the raw amino-acid sequence, 81 residues long: MSHSVKIYDTCIGCTQCVRACPTDVLEMIPWGGCKAKQIASAPRTEDCVGCKRCESACPTDFLSVRVYLWHETTRSMGLAY.

2 4Fe-4S ferredoxin-type domains span residues 2–31 (SHSV…MIPW) and 39–68 (IASA…VRVY). Residues Cys-11, Cys-14, Cys-17, Cys-21, Cys-48, Cys-51, Cys-54, and Cys-58 each coordinate [4Fe-4S] cluster.

The eukaryotic PSI reaction center is composed of at least 11 subunits. Requires [4Fe-4S] cluster as cofactor.

Its subcellular location is the plastid. The protein resides in the chloroplast thylakoid membrane. It carries out the reaction reduced [plastocyanin] + hnu + oxidized [2Fe-2S]-[ferredoxin] = oxidized [plastocyanin] + reduced [2Fe-2S]-[ferredoxin]. Functionally, apoprotein for the two 4Fe-4S centers FA and FB of photosystem I (PSI); essential for photochemical activity. FB is the terminal electron acceptor of PSI, donating electrons to ferredoxin. The C-terminus interacts with PsaA/B/D and helps assemble the protein into the PSI complex. Required for binding of PsaD and PsaE to PSI. PSI is a plastocyanin-ferredoxin oxidoreductase, converting photonic excitation into a charge separation, which transfers an electron from the donor P700 chlorophyll pair to the spectroscopically characterized acceptors A0, A1, FX, FA and FB in turn. In Phaseolus vulgaris (Kidney bean), this protein is Photosystem I iron-sulfur center.